Here is a 118-residue protein sequence, read N- to C-terminus: Large ribosomal subunit protein bL20 (118 aa).

The protein belongs to the bacterial ribosomal protein bL20 family.

Functionally, binds directly to 23S ribosomal RNA and is necessary for the in vitro assembly process of the 50S ribosomal subunit. It is not involved in the protein synthesizing functions of that subunit. The protein is Large ribosomal subunit protein bL20 of Lactobacillus acidophilus (strain ATCC 700396 / NCK56 / N2 / NCFM).